The sequence spans 625 residues: Interleukin-1 receptor-associated kinase-like 2 (625 aa).

Positions 13 to 94 (LDDLCRNMDA…RAAQIILNWK (82 aa)) constitute a Death domain. The segment at 111–181 (KPEKPLAASV…SSDSKDFSTS (71 aa)) is disordered. Ser144 is modified (phosphoserine). Polar residues predominate over residues 169 to 181 (LPTSSDSKDFSTS). Residues 210-489 (FNQNRKISQG…LCLRRRNTSL (280 aa)) enclose the Protein kinase domain. ATP contacts are provided by residues 216–224 (ISQGTFADV), Lys237, and 337–340 (KSSN). A disordered region spans residues 510–540 (LPWSGLSEGTGSSSNTPEETDDVDNSSLDAS). Over residues 516–526 (SEGTGSSSNTP) the composition is skewed to polar residues.

It belongs to the protein kinase superfamily. TKL Ser/Thr protein kinase family. Pelle subfamily. As to quaternary structure, interacts with MYD88. IL-1 stimulation leads to the formation of a signaling complex which dissociates from the IL-1 receptor following the binding of PELI1. In terms of tissue distribution, expressed in spleen, thymus, prostate, lung, liver, skeletal muscle, kidney, pancreas and peripheral blood leukocytes.

Functionally, binds to the IL-1 type I receptor following IL-1 engagement, triggering intracellular signaling cascades leading to transcriptional up-regulation and mRNA stabilization. This chain is Interleukin-1 receptor-associated kinase-like 2 (IRAK2), found in Homo sapiens (Human).